The following is a 67-amino-acid chain: UPF0253 protein VV2574 (67 aa).

The protein belongs to the UPF0253 family.

The protein is UPF0253 protein VV2574 of Vibrio vulnificus (strain YJ016).